Reading from the N-terminus, the 343-residue chain is Aspartate carbamoyltransferase catalytic subunit (343 aa).

Residues arginine 91 and threonine 92 each contribute to the carbamoyl phosphate site. Lysine 119 is a binding site for L-aspartate. Carbamoyl phosphate is bound by residues arginine 141, histidine 171, and glutamine 174. L-aspartate is bound by residues arginine 204 and arginine 259. Glycine 300 and proline 301 together coordinate carbamoyl phosphate.

The protein belongs to the aspartate/ornithine carbamoyltransferase superfamily. ATCase family. In terms of assembly, heterododecamer (2C3:3R2) of six catalytic PyrB chains organized as two trimers (C3), and six regulatory PyrI chains organized as three dimers (R2).

It catalyses the reaction carbamoyl phosphate + L-aspartate = N-carbamoyl-L-aspartate + phosphate + H(+). It participates in pyrimidine metabolism; UMP biosynthesis via de novo pathway; (S)-dihydroorotate from bicarbonate: step 2/3. Catalyzes the condensation of carbamoyl phosphate and aspartate to form carbamoyl aspartate and inorganic phosphate, the committed step in the de novo pyrimidine nucleotide biosynthesis pathway. The sequence is that of Aspartate carbamoyltransferase catalytic subunit from Burkholderia mallei (strain NCTC 10247).